Reading from the N-terminus, the 168-residue chain is Transcription elongation factor GreB (168 aa).

Belongs to the GreA/GreB family. GreB subfamily.

In terms of biological role, necessary for efficient RNA polymerase transcription elongation past template-encoded arresting sites. The arresting sites in DNA have the property of trapping a certain fraction of elongating RNA polymerases that pass through, resulting in locked ternary complexes. Cleavage of the nascent transcript by cleavage factors such as GreA or GreB allows the resumption of elongation from the new 3'terminus. GreB releases sequences of up to 9 nucleotides in length. In Xanthomonas axonopodis pv. citri (strain 306), this protein is Transcription elongation factor GreB.